A 187-amino-acid chain; its full sequence is Ribulose bisphosphate carboxylase small subunit, chloroplastic (187 aa).

The N-terminal 56 residues, 1 to 56 (MASSVMSTATVATGANAAQASMIASFNGLKSAASFPVTRKQDLDITSIASNGGRVE), are a transit peptide targeting the chloroplast.

Belongs to the RuBisCO small chain family. Heterohexadecamer of 8 large and 8 small subunits.

It localises to the plastid. Its subcellular location is the chloroplast. Its function is as follows. RuBisCO catalyzes two reactions: the carboxylation of D-ribulose 1,5-bisphosphate, the primary event in carbon dioxide fixation, as well as the oxidative fragmentation of the pentose substrate. Both reactions occur simultaneously and in competition at the same active site. Although the small subunit is not catalytic it is essential for maximal activity. This Capsicum annuum (Capsicum pepper) protein is Ribulose bisphosphate carboxylase small subunit, chloroplastic.